We begin with the raw amino-acid sequence, 434 residues long: Nicotinate phosphoribosyltransferase (434 aa).

H242 is modified (phosphohistidine; by autocatalysis).

This sequence belongs to the NAPRTase family. Post-translationally, transiently phosphorylated on a His residue during the reaction cycle. Phosphorylation strongly increases the affinity for substrates and increases the rate of nicotinate D-ribonucleotide production. Dephosphorylation regenerates the low-affinity form of the enzyme, leading to product release.

It catalyses the reaction nicotinate + 5-phospho-alpha-D-ribose 1-diphosphate + ATP + H2O = nicotinate beta-D-ribonucleotide + ADP + phosphate + diphosphate. The protein operates within cofactor biosynthesis; NAD(+) biosynthesis; nicotinate D-ribonucleotide from nicotinate: step 1/1. Catalyzes the synthesis of beta-nicotinate D-ribonucleotide from nicotinate and 5-phospho-D-ribose 1-phosphate at the expense of ATP. This is Nicotinate phosphoribosyltransferase from Mesorhizobium japonicum (strain LMG 29417 / CECT 9101 / MAFF 303099) (Mesorhizobium loti (strain MAFF 303099)).